The sequence spans 123 residues: Small ribosomal subunit protein uS12 (123 aa).

Residues 1–24 are disordered; that stretch reads MPTINQLVRKGRTPQKVKSKVPAM. The segment covering 9–19 has biased composition (basic residues); that stretch reads RKGRTPQKVKS. Asp89 bears the 3-methylthioaspartic acid mark.

It belongs to the universal ribosomal protein uS12 family. As to quaternary structure, part of the 30S ribosomal subunit. Contacts proteins S8 and S17. May interact with IF1 in the 30S initiation complex.

Its function is as follows. With S4 and S5 plays an important role in translational accuracy. Interacts with and stabilizes bases of the 16S rRNA that are involved in tRNA selection in the A site and with the mRNA backbone. Located at the interface of the 30S and 50S subunits, it traverses the body of the 30S subunit contacting proteins on the other side and probably holding the rRNA structure together. The combined cluster of proteins S8, S12 and S17 appears to hold together the shoulder and platform of the 30S subunit. In Sphingopyxis alaskensis (strain DSM 13593 / LMG 18877 / RB2256) (Sphingomonas alaskensis), this protein is Small ribosomal subunit protein uS12.